The following is a 507-amino-acid chain: Sterol 14-alpha demethylase CYP51A (507 aa).

The helical transmembrane segment at 7-29 threads the bilayer; the sequence is YPLWVLVALFAVIIANLLYQQLP. Tyr-105 lines the lanosterol pocket. Cys-449 contacts heme.

This sequence belongs to the cytochrome P450 family. Requires heme as cofactor.

It is found in the endoplasmic reticulum membrane. It carries out the reaction a 14alpha-methyl steroid + 3 reduced [NADPH--hemoprotein reductase] + 3 O2 = a Delta(14) steroid + formate + 3 oxidized [NADPH--hemoprotein reductase] + 4 H2O + 4 H(+). It catalyses the reaction a 14alpha-methyl steroid + reduced [NADPH--hemoprotein reductase] + O2 = a 14alpha-hydroxymethyl steroid + oxidized [NADPH--hemoprotein reductase] + H2O + H(+). The enzyme catalyses a 14alpha-hydroxymethyl steroid + reduced [NADPH--hemoprotein reductase] + O2 = a 14alpha-formyl steroid + oxidized [NADPH--hemoprotein reductase] + 2 H2O + H(+). The catalysed reaction is a 14alpha-formyl steroid + reduced [NADPH--hemoprotein reductase] + O2 = a Delta(14) steroid + formate + oxidized [NADPH--hemoprotein reductase] + H2O + 2 H(+). It carries out the reaction lanosterol + 3 reduced [NADPH--hemoprotein reductase] + 3 O2 = 4,4-dimethyl-5alpha-cholesta-8,14,24-trien-3beta-ol + formate + 3 oxidized [NADPH--hemoprotein reductase] + 4 H2O + 4 H(+). It catalyses the reaction lanosterol + reduced [NADPH--hemoprotein reductase] + O2 = 32-hydroxylanosterol + oxidized [NADPH--hemoprotein reductase] + H2O + H(+). The enzyme catalyses 32-hydroxylanosterol + reduced [NADPH--hemoprotein reductase] + O2 = 32-oxolanosterol + oxidized [NADPH--hemoprotein reductase] + 2 H2O + H(+). The catalysed reaction is 32-oxolanosterol + reduced [NADPH--hemoprotein reductase] + O2 = 4,4-dimethyl-5alpha-cholesta-8,14,24-trien-3beta-ol + formate + oxidized [NADPH--hemoprotein reductase] + H2O + 2 H(+). It carries out the reaction eburicol + 3 reduced [NADPH--hemoprotein reductase] + 3 O2 = 14-demethyleburicol + formate + 3 oxidized [NADPH--hemoprotein reductase] + 4 H2O + 4 H(+). It catalyses the reaction eburicol + reduced [NADPH--hemoprotein reductase] + O2 = 32-hydroxyeburicol + oxidized [NADPH--hemoprotein reductase] + H2O + H(+). The enzyme catalyses 32-hydroxyeburicol + reduced [NADPH--hemoprotein reductase] + O2 = 32-oxoeburicol + oxidized [NADPH--hemoprotein reductase] + 2 H2O + H(+). The catalysed reaction is 32-oxoeburicol + reduced [NADPH--hemoprotein reductase] + O2 = 14-demethyleburicol + formate + oxidized [NADPH--hemoprotein reductase] + H2O + 2 H(+). The protein operates within steroid metabolism; ergosterol biosynthesis. In terms of biological role, together with cyp51B and cyp51C, encodes the sterol 14alpha-demethylase that plays a critical role in the third module of ergosterol biosynthesis pathway, being ergosterol the major sterol component in fungal membranes that participates in a variety of functions. CYP51A encodes the sterol 14-alpha-demethylase induced on ergosterol depletion and is responsible for the intrinsic variation in azole sensitivity. The third module or late pathway involves the ergosterol synthesis itself through consecutive reactions that mainly occur in the endoplasmic reticulum (ER) membrane. In filamentous fungi, during the initial step of this module, lanosterol (lanosta-8,24-dien-3beta-ol) can be metabolized to eburicol. Sterol 14alpha-demethylase catalyzes the three-step oxidative removal of the 14alpha-methyl group (C-32) of both these sterols in the form of formate, and converts eburicol and lanosterol to 14-demethyleburicol (4,4,24-trimethylergosta-8,14,24(28)-trienol) and 4,4-dimethyl-5alpha-cholesta-8,14,24-trien-3beta-ol, respectively, which are further metabolized by other enzymes in the pathway to ergosterol. Can also use substrates not intrinsic to fungi, such as 24,25-dihydrolanosterol (DHL), producing 4,4'-dimethyl-8,14-cholestadien-3-beta-ol, but at lower rates than the endogenous substrates. This Gibberella zeae (strain ATCC MYA-4620 / CBS 123657 / FGSC 9075 / NRRL 31084 / PH-1) (Wheat head blight fungus) protein is Sterol 14-alpha demethylase CYP51A.